Reading from the N-terminus, the 134-residue chain is Small ribosomal subunit protein uS8c (134 aa).

Belongs to the universal ribosomal protein uS8 family. As to quaternary structure, part of the 30S ribosomal subunit.

Its subcellular location is the plastid. It localises to the chloroplast. Functionally, one of the primary rRNA binding proteins, it binds directly to 16S rRNA central domain where it helps coordinate assembly of the platform of the 30S subunit. The sequence is that of Small ribosomal subunit protein uS8c (rps8) from Nicotiana tabacum (Common tobacco).